The chain runs to 445 residues: Proline--tRNA ligase (445 aa).

Belongs to the class-II aminoacyl-tRNA synthetase family. ProS type 2 subfamily. As to quaternary structure, homodimer.

It localises to the cytoplasm. The enzyme catalyses tRNA(Pro) + L-proline + ATP = L-prolyl-tRNA(Pro) + AMP + diphosphate. In terms of biological role, catalyzes the attachment of proline to tRNA(Pro) in a two-step reaction: proline is first activated by ATP to form Pro-AMP and then transferred to the acceptor end of tRNA(Pro). This Cereibacter sphaeroides (strain ATCC 17029 / ATH 2.4.9) (Rhodobacter sphaeroides) protein is Proline--tRNA ligase.